Here is a 156-residue protein sequence, read N- to C-terminus: Small ribosomal subunit protein uS7 (156 aa).

The protein belongs to the universal ribosomal protein uS7 family. As to quaternary structure, part of the 30S ribosomal subunit. Contacts proteins S9 and S11.

In terms of biological role, one of the primary rRNA binding proteins, it binds directly to 16S rRNA where it nucleates assembly of the head domain of the 30S subunit. Is located at the subunit interface close to the decoding center, probably blocks exit of the E-site tRNA. The protein is Small ribosomal subunit protein uS7 of Buchnera aphidicola subsp. Baizongia pistaciae (strain Bp).